The primary structure comprises 295 residues: Shikimate dehydrogenase (NADP(+)) (295 aa).

Shikimate-binding positions include 18–20 (SRS) and threonine 66. Lysine 70 serves as the catalytic Proton acceptor. Positions 91 and 106 each coordinate shikimate. Residues 130–134 (GNGGA) and methionine 235 each bind NADP(+). Tyrosine 237 is a binding site for shikimate. NADP(+) is bound at residue glycine 258.

It belongs to the shikimate dehydrogenase family. As to quaternary structure, homodimer.

It catalyses the reaction shikimate + NADP(+) = 3-dehydroshikimate + NADPH + H(+). Its pathway is metabolic intermediate biosynthesis; chorismate biosynthesis; chorismate from D-erythrose 4-phosphate and phosphoenolpyruvate: step 4/7. In terms of biological role, involved in the biosynthesis of the chorismate, which leads to the biosynthesis of aromatic amino acids. Catalyzes the reversible NADPH linked reduction of 3-dehydroshikimate (DHSA) to yield shikimate (SA). In Chlorobium phaeobacteroides (strain DSM 266 / SMG 266 / 2430), this protein is Shikimate dehydrogenase (NADP(+)).